Reading from the N-terminus, the 212-residue chain is Large ribosomal subunit protein uL1 (212 aa).

It belongs to the universal ribosomal protein uL1 family. In terms of assembly, part of the 50S ribosomal subunit.

Its function is as follows. Binds directly to 23S rRNA. Probably involved in E site tRNA release. Functionally, protein L1 is also a translational repressor protein, it controls the translation of its operon by binding to its mRNA. This is Large ribosomal subunit protein uL1 from Methanosphaera stadtmanae (strain ATCC 43021 / DSM 3091 / JCM 11832 / MCB-3).